The following is a 340-amino-acid chain: HTH-type transcriptional regulator GalS (340 aa).

Residues 1–56 (MITIRDVARQAGVSVATVSRVLNNSALVSPDTRDAVMQAVTLLGYRPNANAQALAT) enclose the HTH lacI-type domain. The H-T-H motif DNA-binding region spans 4–23 (IRDVARQAGVSVATVSRVLN).

Homodimer.

Functionally, repressor of the mgl operon. Binds galactose and D-fucose as inducers. GalS binds to an operator DNA sequence within its own coding sequence. In Salmonella typhimurium (strain LT2 / SGSC1412 / ATCC 700720), this protein is HTH-type transcriptional regulator GalS (galS).